A 226-amino-acid chain; its full sequence is NADH-ubiquinone oxidoreductase 19.3 kDa subunit, mitochondrial (226 aa).

The tract at residues 40–68 (ATGAVAPAGAQHGIARRERREVPLPSQEG) is disordered. [4Fe-4S] cluster-binding residues include cysteine 101, cysteine 102, cysteine 166, and cysteine 196.

It belongs to the complex I 20 kDa subunit family. Complex I is composed of about 40 different subunits. This is a component of the iron-sulfur (IP) fragment of the enzyme. The cofactor is [4Fe-4S] cluster.

It is found in the mitochondrion. The catalysed reaction is a ubiquinone + NADH + 5 H(+)(in) = a ubiquinol + NAD(+) + 4 H(+)(out). Functionally, core subunit of the mitochondrial membrane respiratory chain NADH dehydrogenase (Complex I) that is believed to belong to the minimal assembly required for catalysis. Complex I functions in the transfer of electrons from NADH to the respiratory chain. The immediate electron acceptor for the enzyme is believed to be ubiquinone. The chain is NADH-ubiquinone oxidoreductase 19.3 kDa subunit, mitochondrial from Neurospora crassa (strain ATCC 24698 / 74-OR23-1A / CBS 708.71 / DSM 1257 / FGSC 987).